Reading from the N-terminus, the 406-residue chain is MDRVRSLIGNRRGRRHNRQHPPYPHSGSPSTVNLLGANGYGDDQSTIFARENESLETSANEGDDSADAATLNTAVSEGSTIGDLQRQGYVNRAPRFTSERAMPFVSVLLQRGFFAFPSEESLQLFLHNKRKLDNIDPKRGLGLPLFHAISLNLVKSLFSDQNTPVMRIYKYVMIDSQCDKPPLNSEVVSRINENVSIYKYEFCTILKKMESHNFSSRVEHDFIFHRKDEPDVHIPMINYNQRKNADTAIHGLNLRWYGTTSLASPFGSNSINLLVLDDTMASYMNQQTIEEFDSYSRSRPTRPLGYLPVWARYTDDKVSVIPKKRTLRVATLYLQETDSFDDGSSLTSTNYTEMGSNIIENVPWDSQILTCMCMLLHEYESRKEKRHTAWGSSTTYMLNGPAGLLM.

Residues 1–36 (MDRVRSLIGNRRGRRHNRQHPPYPHSGSPSTVNLLG) are disordered.

To yeast YMR316w.

This is an uncharacterized protein from Saccharomyces cerevisiae (strain ATCC 204508 / S288c) (Baker's yeast).